Reading from the N-terminus, the 38-residue chain is Photosystem II reaction center protein L (38 aa).

A helical membrane pass occupies residues 17–37 (SLYWGLLLIFVLAVLFSNYFF).

Belongs to the PsbL family. As to quaternary structure, PSII is composed of 1 copy each of membrane proteins PsbA, PsbB, PsbC, PsbD, PsbE, PsbF, PsbH, PsbI, PsbJ, PsbK, PsbL, PsbM, PsbT, PsbX, PsbY, PsbZ, Psb30/Ycf12, at least 3 peripheral proteins of the oxygen-evolving complex and a large number of cofactors. It forms dimeric complexes.

The protein localises to the plastid. The protein resides in the chloroplast thylakoid membrane. In terms of biological role, one of the components of the core complex of photosystem II (PSII). PSII is a light-driven water:plastoquinone oxidoreductase that uses light energy to abstract electrons from H(2)O, generating O(2) and a proton gradient subsequently used for ATP formation. It consists of a core antenna complex that captures photons, and an electron transfer chain that converts photonic excitation into a charge separation. This subunit is found at the monomer-monomer interface and is required for correct PSII assembly and/or dimerization. The protein is Photosystem II reaction center protein L of Psilotum nudum (Whisk fern).